The following is a 265-amino-acid chain: 3-methyl-2-oxobutanoate hydroxymethyltransferase (265 aa).

Mg(2+) contacts are provided by aspartate 45 and aspartate 84. 3-methyl-2-oxobutanoate contacts are provided by residues 45 to 46 (DS), aspartate 84, and lysine 112. Glutamate 114 lines the Mg(2+) pocket. Residue glutamate 181 is the Proton acceptor of the active site.

Belongs to the PanB family. Homodecamer; pentamer of dimers. Mg(2+) serves as cofactor.

The protein resides in the cytoplasm. It catalyses the reaction 3-methyl-2-oxobutanoate + (6R)-5,10-methylene-5,6,7,8-tetrahydrofolate + H2O = 2-dehydropantoate + (6S)-5,6,7,8-tetrahydrofolate. Its pathway is cofactor biosynthesis; (R)-pantothenate biosynthesis; (R)-pantoate from 3-methyl-2-oxobutanoate: step 1/2. Functionally, catalyzes the reversible reaction in which hydroxymethyl group from 5,10-methylenetetrahydrofolate is transferred onto alpha-ketoisovalerate to form ketopantoate. In Pseudoalteromonas atlantica (strain T6c / ATCC BAA-1087), this protein is 3-methyl-2-oxobutanoate hydroxymethyltransferase.